A 154-amino-acid chain; its full sequence is Aspartate carbamoyltransferase regulatory chain (154 aa).

Zn(2+)-binding residues include C109, C114, C138, and C141.

This sequence belongs to the PyrI family. In terms of assembly, contains catalytic and regulatory chains. Zn(2+) serves as cofactor.

In terms of biological role, involved in allosteric regulation of aspartate carbamoyltransferase. The polypeptide is Aspartate carbamoyltransferase regulatory chain (Yersinia enterocolitica serotype O:8 / biotype 1B (strain NCTC 13174 / 8081)).